Reading from the N-terminus, the 335-residue chain is Teichoic acids export ATP-binding protein TagH (335 aa).

In terms of domain architecture, ABC transporter spans 26-246 (IKGLFMPKSQ…YDEFVKWFNK (221 aa)). ATP is bound at residue 60–67 (GINGSGKS).

This sequence belongs to the ABC transporter superfamily. Teichoic acids exporter (TC 3.A.1.104.1) family. As to quaternary structure, the complex is composed of two ATP-binding proteins (TagH) and two transmembrane proteins (TagG).

The protein localises to the cell membrane. The catalysed reaction is ATP + H2O + teichoic acidSide 1 = ADP + phosphate + teichoic acidSide 2.. Its function is as follows. Part of the ABC transporter complex TagGH involved in teichoic acids export. Responsible for energy coupling to the transport system. This is Teichoic acids export ATP-binding protein TagH from Listeria innocua serovar 6a (strain ATCC BAA-680 / CLIP 11262).